A 204-amino-acid polypeptide reads, in one-letter code: Cold and drought-regulated protein CORA (204 aa).

A run of 18 repeats spans residues Tyr54–Gly59, Tyr65–Gly70, Tyr71–Gly76, Tyr78–Gly83, Tyr85–Gly90, His98–Gly100, His101–Gly103, His112–Gly114, His115–Gly117, His126–Gly128, His129–Gly131, Tyr164–Gly169, Tyr171–Gly176, His178–Gly180, His181–Gly183, His184–Gly186, His187–Gly189, and His190–Gly192. The segment at Tyr54–Gly176 is 7 X 6 AA repeats of Y-N-H-G-G-G. The segment at His98 to Gly192 is 11 X 3 AA repeats of H-G-G. Residues Gly169 to Gly194 are compositionally biased toward gly residues. A disordered region spans residues Gly169 to Asn204.

It belongs to the GRP family.

In terms of biological role, may be involved in resistance of the plant to environmental stress. This is Cold and drought-regulated protein CORA (CORA) from Medicago sativa (Alfalfa).